The primary structure comprises 382 residues: Alkanesulfonate monooxygenase (382 aa).

This sequence belongs to the SsuD family.

The enzyme catalyses an alkanesulfonate + FMNH2 + O2 = an aldehyde + FMN + sulfite + H2O + 2 H(+). In terms of biological role, catalyzes the desulfonation of aliphatic sulfonates. In Pseudomonas putida (strain GB-1), this protein is Alkanesulfonate monooxygenase.